Reading from the N-terminus, the 474-residue chain is ATP synthase subunit beta 2 (474 aa).

157–164 is an ATP binding site; sequence GGAGVGKT.

Belongs to the ATPase alpha/beta chains family. F-type ATPases have 2 components, CF(1) - the catalytic core - and CF(0) - the membrane proton channel. CF(1) has five subunits: alpha(3), beta(3), gamma(1), delta(1), epsilon(1). CF(0) has three main subunits: a(1), b(2) and c(9-12). The alpha and beta chains form an alternating ring which encloses part of the gamma chain. CF(1) is attached to CF(0) by a central stalk formed by the gamma and epsilon chains, while a peripheral stalk is formed by the delta and b chains.

The protein localises to the cell inner membrane. It carries out the reaction ATP + H2O + 4 H(+)(in) = ADP + phosphate + 5 H(+)(out). Produces ATP from ADP in the presence of a proton gradient across the membrane. The catalytic sites are hosted primarily by the beta subunits. In Polaromonas naphthalenivorans (strain CJ2), this protein is ATP synthase subunit beta 2.